Here is a 484-residue protein sequence, read N- to C-terminus: Sperm motility kinase Tcr mutant form (484 aa).

The 249-residue stretch at 8–256 (YEMLETIGQG…VAEVMVHPWV (249 aa)) folds into the Protein kinase domain. ATP contacts are provided by residues 14–22 (IGQGGCAQV) and Lys-37. Asp-127 serves as the catalytic Proton acceptor. 2 disordered regions span residues 355–400 (EPTG…TMDQ) and 426–446 (STEG…RGWP). Polar residues predominate over residues 391-400 (PINTTPTMDQ).

This sequence belongs to the protein kinase superfamily. Tyr protein kinase family. Smok subfamily. As to expression, testis-specific. Expressed in the testis from 22 days postpartum (22 dpp). Expressed late in spermiogenesis, only in Tcr-containing t-haplotypes.

The enzyme catalyses L-seryl-[protein] + ATP = O-phospho-L-seryl-[protein] + ADP + H(+). It carries out the reaction L-threonyl-[protein] + ATP = O-phospho-L-threonyl-[protein] + ADP + H(+). Its function is as follows. While the main function of Smoks is to control sperm motility, the role of Smok-Tcr, with reduced kinase activity, is to counterbalance a signaling impairment caused by the distorter/sterility loci, giving t-sperm an advantage in reaching the oocytes. Transmission ratio distortion also called segregation distortion is the name given to the phenomenon above-mentioned. Being associated with the T-complex, it allows males heterozygous for a complete t-haplotype to preferentially transmit the t-haplotype chromosome. This is Sperm motility kinase Tcr mutant form (Smoktcr) from Mus musculus (Mouse).